We begin with the raw amino-acid sequence, 245 residues long: Ribonuclease 3 (245 aa).

The RNase III domain occupies Phe-17–Gly-146. Glu-59 is a binding site for Mg(2+). Asp-63 is an active-site residue. The Mg(2+) site is built by Asp-132 and Glu-135. Glu-135 is an active-site residue. The 70-residue stretch at Asp-172–Asn-241 folds into the DRBM domain.

This sequence belongs to the ribonuclease III family. As to quaternary structure, homodimer. It depends on Mg(2+) as a cofactor.

The protein localises to the cytoplasm. The catalysed reaction is Endonucleolytic cleavage to 5'-phosphomonoester.. Its function is as follows. Digests double-stranded RNA. Involved in the processing of primary rRNA transcript to yield the immediate precursors to the large and small rRNAs (23S and 16S). Processes some mRNAs, and tRNAs when they are encoded in the rRNA operon. Processes pre-crRNA and tracrRNA of type II CRISPR loci if present in the organism. The protein is Ribonuclease 3 of Staphylococcus epidermidis (strain ATCC 35984 / DSM 28319 / BCRC 17069 / CCUG 31568 / BM 3577 / RP62A).